The chain runs to 342 residues: Ketol-acid reductoisomerase (NADP(+)) (342 aa).

The region spanning 2–182 (AKIYYDDDAD…GGLRAGGIET (181 aa)) is the KARI N-terminal Rossmann domain. Residues 25-28 (YGSQ), Arg-48, Ser-51, Ser-53, and 83-86 (DQNQ) contribute to the NADP(+) site. Residue His-108 is part of the active site. Residue Gly-134 coordinates NADP(+). The region spanning 183–328 (SFREETETDL…KELRKMYSWL (146 aa)) is the KARI C-terminal knotted domain. Asp-191, Glu-195, Glu-227, and Glu-231 together coordinate Mg(2+). Ser-252 is a substrate binding site.

The protein belongs to the ketol-acid reductoisomerase family. Mg(2+) serves as cofactor.

The catalysed reaction is (2R)-2,3-dihydroxy-3-methylbutanoate + NADP(+) = (2S)-2-acetolactate + NADPH + H(+). It carries out the reaction (2R,3R)-2,3-dihydroxy-3-methylpentanoate + NADP(+) = (S)-2-ethyl-2-hydroxy-3-oxobutanoate + NADPH + H(+). It functions in the pathway amino-acid biosynthesis; L-isoleucine biosynthesis; L-isoleucine from 2-oxobutanoate: step 2/4. Its pathway is amino-acid biosynthesis; L-valine biosynthesis; L-valine from pyruvate: step 2/4. Involved in the biosynthesis of branched-chain amino acids (BCAA). Catalyzes an alkyl-migration followed by a ketol-acid reduction of (S)-2-acetolactate (S2AL) to yield (R)-2,3-dihydroxy-isovalerate. In the isomerase reaction, S2AL is rearranged via a Mg-dependent methyl migration to produce 3-hydroxy-3-methyl-2-ketobutyrate (HMKB). In the reductase reaction, this 2-ketoacid undergoes a metal-dependent reduction by NADPH to yield (R)-2,3-dihydroxy-isovalerate. The protein is Ketol-acid reductoisomerase (NADP(+)) of Cutibacterium acnes (strain DSM 16379 / KPA171202) (Propionibacterium acnes).